The chain runs to 225 residues: MEPIKNLPRLGRILGYQFQQIALLEQALTHRSAASKHNERLEFLGDSILSIVISDALYHQFPKATEGDLSRMRATLVCGKMLAEIAKEFKLGDYLKLGPGELKSGGFRRESILADAMEAIIGAIYLDADIETCRTLVLNWYKSRLAVIEPVNQKDPKTLLQEHLQGFKQPLPVYTVVNISGEAHAQTFTVECKVEQLKEAVIGVANSRRKAEQIAAAEVLERIKK.

In terms of domain architecture, RNase III spans 7-129 (LPRLGRILGY…IIGAIYLDAD (123 aa)). Mg(2+) is bound at residue Glu42. The active site involves Asp46. Residues Asp115 and Glu118 each contribute to the Mg(2+) site. Residue Glu118 is part of the active site. A DRBM domain is found at 155–225 (DPKTLLQEHL…AAEVLERIKK (71 aa)).

Belongs to the ribonuclease III family. In terms of assembly, homodimer. Mg(2+) is required as a cofactor.

The protein resides in the cytoplasm. It catalyses the reaction Endonucleolytic cleavage to 5'-phosphomonoester.. Its function is as follows. Digests double-stranded RNA. Involved in the processing of primary rRNA transcript to yield the immediate precursors to the large and small rRNAs (23S and 16S). Processes some mRNAs, and tRNAs when they are encoded in the rRNA operon. Processes pre-crRNA and tracrRNA of type II CRISPR loci if present in the organism. This Shewanella loihica (strain ATCC BAA-1088 / PV-4) protein is Ribonuclease 3.